The following is a 164-amino-acid chain: SsrA-binding protein (164 aa).

This sequence belongs to the SmpB family.

It is found in the cytoplasm. Required for rescue of stalled ribosomes mediated by trans-translation. Binds to transfer-messenger RNA (tmRNA), required for stable association of tmRNA with ribosomes. tmRNA and SmpB together mimic tRNA shape, replacing the anticodon stem-loop with SmpB. tmRNA is encoded by the ssrA gene; the 2 termini fold to resemble tRNA(Ala) and it encodes a 'tag peptide', a short internal open reading frame. During trans-translation Ala-aminoacylated tmRNA acts like a tRNA, entering the A-site of stalled ribosomes, displacing the stalled mRNA. The ribosome then switches to translate the ORF on the tmRNA; the nascent peptide is terminated with the 'tag peptide' encoded by the tmRNA and targeted for degradation. The ribosome is freed to recommence translation, which seems to be the essential function of trans-translation. The sequence is that of SsrA-binding protein from Synechococcus sp. (strain CC9311).